A 160-amino-acid chain; its full sequence is Large ribosomal subunit protein uL13 (160 aa).

It belongs to the universal ribosomal protein uL13 family. As to quaternary structure, part of the 50S ribosomal subunit.

Its function is as follows. This protein is one of the early assembly proteins of the 50S ribosomal subunit, although it is not seen to bind rRNA by itself. It is important during the early stages of 50S assembly. The sequence is that of Large ribosomal subunit protein uL13 from Orientia tsutsugamushi (strain Boryong) (Rickettsia tsutsugamushi).